A 376-amino-acid chain; its full sequence is Hydroxylysine kinase (376 aa).

Residue aspartate 229 is the Proton acceptor of the active site.

Belongs to the aminoglycoside phosphotransferase family.

Its subcellular location is the cytoplasm. The enzyme catalyses (5R)-5-hydroxy-L-lysine + GTP = (5R)-5-phosphooxy-L-lysine + GDP + H(+). Functionally, catalyzes the GTP-dependent phosphorylation of 5-hydroxy-L-lysine. The polypeptide is Hydroxylysine kinase (Hykk) (Mus musculus (Mouse)).